Reading from the N-terminus, the 444-residue chain is CBL-interacting serine/threonine-protein kinase 1 (444 aa).

Residues 20-275 form the Protein kinase domain; sequence YELGRTLGEG…VVGIKASEWF (256 aa). ATP-binding positions include 26–34 and lysine 49; that span reads LGEGNFGKV. Aspartate 143 serves as the catalytic Proton acceptor. The activation loop stretch occupies residues 161–190; that stretch reads DFGLSALPQHFRDDGLLHTTCGSPNYVAPE. Residue serine 165 is modified to Phosphoserine. Threonine 179 bears the Phosphothreonine mark. In terms of domain architecture, NAF spans 313-337; the sequence is DSPTIINAFQLIGMSSFLDLSGFFE. Residues 343 to 372 form a PPI region; that stretch reads ERRIRFTSNSSAKDLLEKIETAVTEMGFSV.

This sequence belongs to the protein kinase superfamily. CAMK Ser/Thr protein kinase family. SNF1 subfamily. Interacts with CBL1. Interacts with CBL2. Interacts with CBL3. Interacts with CBL9. Interacts with ECT1 and ECT2. Requires Mn(2+) as cofactor. Post-translationally, autophosphorylated. As to expression, ubiquitous.

The enzyme catalyses L-seryl-[protein] + ATP = O-phospho-L-seryl-[protein] + ADP + H(+). The catalysed reaction is L-threonyl-[protein] + ATP = O-phospho-L-threonyl-[protein] + ADP + H(+). In terms of biological role, CIPK serine-threonine protein kinases interact with CBL proteins. Binding of a CBL protein to the regulatory NAF domain of CIPK protein lead to the activation of the kinase in a calcium-dependent manner. This is CBL-interacting serine/threonine-protein kinase 1 (CIPK1) from Arabidopsis thaliana (Mouse-ear cress).